Reading from the N-terminus, the 295-residue chain is Trimeric intracellular cation channel type A (295 aa).

At 1-18 (MELLSALSLGELALSFSR) the chain is on the lumenal side. A helical membrane pass occupies residues 19–39 (VPLFPVFDLSYFIVSILYLKY). The Cytoplasmic portion of the chain corresponds to 40–51 (EPGAVELSRRHP). The chain crosses the membrane as a helical span at residues 52-72 (VASWLCAMLHCFGSYILADLL). Residues 73–85 (LGEPLIDYFSNNS) lie on the Lumenal side of the membrane. A Ca(2+)-binding site is contributed by G74. Residues 86–106 (SILLASAVWYLIFFCPLDLFY) form a helical membrane-spanning segment. Topologically, residues 107–144 (KCVCFLPVKLIFVAMKEVVRVRKIAVGIHHAHHHYHHG) are cytoplasmic. K122 and R126 together coordinate a 1,2-diacyl-sn-glycero-3-phospho-(1D-myo-inositol-4,5-bisphosphate). A helical membrane pass occupies residues 145–165 (WFIMIATGWVKGSGVALLSNV). Over 166–178 (EQLLRGVWKPETN) the chain is Lumenal. Residues 179-199 (EILHMSFPTKASLYGAILFTL) form a helical membrane-spanning segment. The Cytoplasmic portion of the chain corresponds to 200 to 209 (QQTRWLPVSK). The chain crosses the membrane as a helical span at residues 210–230 (ASLIFIFTMFMVSCKVFLTAT). Topologically, residues 231 to 234 (HSHS) are lumenal. A helical transmembrane segment spans residues 235–255 (SPFDVLEAYVCPVLFGTGSGG). At 256–295 (DHPQDNHGAWPGGPPSGALATKSKEELSEGSRKKKTKKAD) the chain is on the cytoplasmic side. Residues 256 to 295 (DHPQDNHGAWPGGPPSGALATKSKEELSEGSRKKKTKKAD) form a disordered region. The segment covering 277–286 (KSKEELSEGS) has biased composition (basic and acidic residues).

This sequence belongs to the TMEM38 family. As to quaternary structure, homotrimer; conformation seems to be controled by binding to diacylglycerol (DAG).

The protein localises to the sarcoplasmic reticulum membrane. Its subcellular location is the nucleus membrane. It catalyses the reaction K(+)(in) = K(+)(out). Channel activity is activated by a change of voltage within the sarcoplasmic reticulum lumen and blocked by luminal high Ca(2+) levels. Its function is as follows. Intracellular monovalent cation channel required for maintenance of rapid intracellular calcium release. Acts as a potassium counter-ion channel that functions in synchronization with calcium release from intracellular stores. Opened by a change of voltage within the sarcoplasmic reticulum lumen. The polypeptide is Trimeric intracellular cation channel type A (Oryctolagus cuniculus (Rabbit)).